The chain runs to 788 residues: Endonuclease MutS2 (788 aa).

332–339 (GPNTGGKT) is an ATP binding site. The Smr domain occupies 713-788 (VDLRGMDAEE…GTGVTVVELK (76 aa)).

It belongs to the DNA mismatch repair MutS family. MutS2 subfamily. Homodimer. Binds to stalled ribosomes, contacting rRNA.

Its function is as follows. Endonuclease that is involved in the suppression of homologous recombination and thus may have a key role in the control of bacterial genetic diversity. In terms of biological role, acts as a ribosome collision sensor, splitting the ribosome into its 2 subunits. Detects stalled/collided 70S ribosomes which it binds and splits by an ATP-hydrolysis driven conformational change. Acts upstream of the ribosome quality control system (RQC), a ribosome-associated complex that mediates the extraction of incompletely synthesized nascent chains from stalled ribosomes and their subsequent degradation. Probably generates substrates for RQC. In Clostridium botulinum (strain Langeland / NCTC 10281 / Type F), this protein is Endonuclease MutS2.